The chain runs to 89 residues: Small ribosomal subunit protein uS15 (89 aa).

This sequence belongs to the universal ribosomal protein uS15 family. As to quaternary structure, part of the 30S ribosomal subunit. Forms a bridge to the 50S subunit in the 70S ribosome, contacting the 23S rRNA.

Its function is as follows. One of the primary rRNA binding proteins, it binds directly to 16S rRNA where it helps nucleate assembly of the platform of the 30S subunit by binding and bridging several RNA helices of the 16S rRNA. In terms of biological role, forms an intersubunit bridge (bridge B4) with the 23S rRNA of the 50S subunit in the ribosome. The chain is Small ribosomal subunit protein uS15 from Pseudomonas putida (Arthrobacter siderocapsulatus).